The sequence spans 1443 residues: ARF guanine-nucleotide exchange factor GNL1 (1443 aa).

Residues 554-743 (FVRKVKHIKK…SEIYHSIRHS (190 aa)) enclose the SEC7 domain. Residue E658 is part of the active site. 2 disordered regions span residues 917-949 (DDPE…AMPR) and 1424-1443 (DQFQ…GNEV). Residues 939-949 (VSQSQPSAMPR) are compositionally biased toward polar residues. A compositionally biased stretch (basic and acidic residues) spans 1425 to 1435 (QFQRRNAKPED).

In terms of assembly, homodimer.

The protein localises to the cytoplasm. It localises to the cytosol. Its subcellular location is the golgi apparatus membrane. Its function is as follows. Activates the ARF proteins by exchanging bound GDP for free GTP. Plays a role in vesicular protein sorting. Acts as the major regulator of retrograde Golgi to endoplasmic reticulum trafficking but is also involved in the endocytosis process. Could function redundantly with GNOM. Regulates vesicle trafficking required for the coordinated polar localization of auxin efflux carriers which in turn determines the direction of auxin flow. Mediates the endocytosis of PIN2 from plasma membrane to endosomal compartments. Required for maintenance of endoplasmic reticulum morphology. The chain is ARF guanine-nucleotide exchange factor GNL1 (GNL1) from Arabidopsis thaliana (Mouse-ear cress).